Here is a 488-residue protein sequence, read N- to C-terminus: Glutamyl-tRNA(Gln) amidotransferase subunit A (488 aa).

Catalysis depends on charge relay system residues Lys77 and Ser152. The active-site Acyl-ester intermediate is Ser176.

This sequence belongs to the amidase family. GatA subfamily. In terms of assembly, heterotrimer of A, B and C subunits.

The catalysed reaction is L-glutamyl-tRNA(Gln) + L-glutamine + ATP + H2O = L-glutaminyl-tRNA(Gln) + L-glutamate + ADP + phosphate + H(+). In terms of biological role, allows the formation of correctly charged Gln-tRNA(Gln) through the transamidation of misacylated Glu-tRNA(Gln) in organisms which lack glutaminyl-tRNA synthetase. The reaction takes place in the presence of glutamine and ATP through an activated gamma-phospho-Glu-tRNA(Gln). The chain is Glutamyl-tRNA(Gln) amidotransferase subunit A from Streptococcus mutans serotype c (strain ATCC 700610 / UA159).